Consider the following 85-residue polypeptide: Splicing factor 3B subunit 5 (85 aa).

The protein belongs to the SF3B5 family. As to quaternary structure, component of the SF3B complex. SF3B complex associates with the splicing factor SF3A complex and a 12S RNA unit to form the U2 small nuclear ribonucleoproteins complex (U2 snRNP). Identified in the SAGA transcription regulatory histone acetylation (HAT) complex; the interaction is RNA-independent.

It localises to the nucleus. Involved in pre-mRNA splicing as component of spliceosome. As part of the spliceosome complex, plays a role in the regulation of spermatogonial differentiation. When associated with the SAGA transcription regulatory histone acetylation (HAT) complex, might be involved in the transcriptional activation of a subset of SAGA-regulated genes. The protein is Splicing factor 3B subunit 5 of Drosophila melanogaster (Fruit fly).